The primary structure comprises 129 residues: MSGRGKQGGKVRAKAKSRSSRAGLQFPVGRVHRLLRKGNYAERVGAGAPVYMAAVLEYLTAEILELAGNAARDNKKTRIIPRHLQLAIRNDEELNKLLGKVTIAQGGVLPNIQAVLLPKKTESHKAKSK.

Residues 1 to 22 (MSGRGKQGGKVRAKAKSRSSRA) are disordered. At Ser-2 the chain carries N-acetylserine. Position 2 is a phosphoserine (Ser-2). Lys-6 carries the N6-acetyllysine modification. The segment covering 7-19 (QGGKVRAKAKSRS) has biased composition (basic residues). Lys-10 carries the post-translational modification N6-lactoyllysine; alternate. Residues Lys-14 and Lys-16 each participate in a glycyl lysine isopeptide (Lys-Gly) (interchain with G-Cter in ubiquitin) cross-link. The residue at position 105 (Gln-105) is an N5-methylglutamine. Residue Lys-120 forms a Glycyl lysine isopeptide (Lys-Gly) (interchain with G-Cter in ubiquitin) linkage.

It belongs to the histone H2A family. The nucleosome is a histone octamer containing two molecules each of H2A, H2B, H3 and H4 assembled in one H3-H4 heterotetramer and two H2A-H2B heterodimers. The octamer wraps approximately 147 bp of DNA. In terms of processing, monoubiquitination of Lys-120 (H2AXK119ub) gives a specific tag for epigenetic transcriptional repression. Following DNA double-strand breaks (DSBs), it is ubiquitinated through 'Lys-63' linkage of ubiquitin moieties. Phosphorylation on Ser-2 is enhanced during mitosis. Phosphorylation on Ser-2 directly represses transcription.

The protein resides in the nucleus. The protein localises to the chromosome. In terms of biological role, core component of nucleosome. Nucleosomes wrap and compact DNA into chromatin, limiting DNA accessibility to the cellular machineries which require DNA as a template. Histones thereby play a central role in transcription regulation, DNA repair, DNA replication and chromosomal stability. DNA accessibility is regulated via a complex set of post-translational modifications of histones, also called histone code, and nucleosome remodeling. The polypeptide is Histone H2A.J (H2A-IX) (Gallus gallus (Chicken)).